The primary structure comprises 88 residues: UPF0297 protein BT9727_4120 (88 aa).

The protein belongs to the UPF0297 family.

The chain is UPF0297 protein BT9727_4120 from Bacillus thuringiensis subsp. konkukian (strain 97-27).